Here is a 406-residue protein sequence, read N- to C-terminus: Phosphopentomutase (406 aa).

Aspartate 10, aspartate 305, histidine 310, aspartate 346, histidine 347, and histidine 358 together coordinate Mn(2+).

Belongs to the phosphopentomutase family. Mn(2+) serves as cofactor.

It localises to the cytoplasm. The enzyme catalyses 2-deoxy-alpha-D-ribose 1-phosphate = 2-deoxy-D-ribose 5-phosphate. The catalysed reaction is alpha-D-ribose 1-phosphate = D-ribose 5-phosphate. It participates in carbohydrate degradation; 2-deoxy-D-ribose 1-phosphate degradation; D-glyceraldehyde 3-phosphate and acetaldehyde from 2-deoxy-alpha-D-ribose 1-phosphate: step 1/2. Functionally, isomerase that catalyzes the conversion of deoxy-ribose 1-phosphate (dRib-1-P) and ribose 1-phosphate (Rib-1-P) to deoxy-ribose 5-phosphate (dRib-5-P) and ribose 5-phosphate (Rib-5-P), respectively. This is Phosphopentomutase from Photobacterium profundum (strain SS9).